Consider the following 390-residue polypeptide: Ribonucleoside-diphosphate reductase subunit M2 (390 aa).

Ser-20 bears the Phosphoserine mark. Residue Thr-33 is modified to Phosphothreonine. The short motif at 49-51 (RRI) is the Cy element. The Fe cation site is built by Asp-139, Glu-170, and His-173. Tyr-177 is an active-site residue. Fe cation contacts are provided by Glu-233, Glu-267, and His-270.

Belongs to the ribonucleoside diphosphate reductase small chain family. Heterodimer of a large and a small subunit. Interacts (via Cy motif and when phosphorylated at Thr-33) with CCNF; the interaction occurs exclusively in G2 and early M. It depends on Fe cation as a cofactor. Phosphorylation on Ser-20 relieves the inhibitory effect on Wnt signaling. Phosphorylated on Thr-33 by CDK1 and CDK2; predominantly in G2 and M phase. In terms of processing, ubiquitinated by the SCF(CCNF) E3 ubiquitin-protein ligase complex; leading to its degradation by the proteasome.

It localises to the cytoplasm. Its subcellular location is the nucleus. It carries out the reaction a 2'-deoxyribonucleoside 5'-diphosphate + [thioredoxin]-disulfide + H2O = a ribonucleoside 5'-diphosphate + [thioredoxin]-dithiol. Its function is as follows. Provides the precursors necessary for DNA synthesis. Catalyzes the biosynthesis of deoxyribonucleotides from the corresponding ribonucleotides. Inhibits Wnt signaling. In Rattus norvegicus (Rat), this protein is Ribonucleoside-diphosphate reductase subunit M2 (Rrm2).